Here is a 79-residue protein sequence, read N- to C-terminus: MDNIEQRVKKIVAEQLGVAEGDIKNESSFVNDLGADSLDTIELVMALEDEFGIEIPDEEAEKITTVQLAIDFAKSKAQG.

Residues 2–77 enclose the Carrier domain; sequence DNIEQRVKKI…LAIDFAKSKA (76 aa). An O-(pantetheine 4'-phosphoryl)serine modification is found at Ser37.

Belongs to the acyl carrier protein (ACP) family. Post-translationally, 4'-phosphopantetheine is transferred from CoA to a specific serine of apo-ACP by AcpS. This modification is essential for activity because fatty acids are bound in thioester linkage to the sulfhydryl of the prosthetic group.

The protein resides in the cytoplasm. The protein operates within lipid metabolism; fatty acid biosynthesis. Its function is as follows. Carrier of the growing fatty acid chain in fatty acid biosynthesis. This is Acyl carrier protein from Polynucleobacter necessarius subsp. necessarius (strain STIR1).